A 134-amino-acid polypeptide reads, in one-letter code: ATP synthase epsilon chain (134 aa).

It belongs to the ATPase epsilon chain family. In terms of assembly, F-type ATPases have 2 components, CF(1) - the catalytic core - and CF(0) - the membrane proton channel. CF(1) has five subunits: alpha(3), beta(3), gamma(1), delta(1), epsilon(1). CF(0) has three main subunits: a, b and c.

It is found in the cell inner membrane. Produces ATP from ADP in the presence of a proton gradient across the membrane. The sequence is that of ATP synthase epsilon chain from Sinorhizobium medicae (strain WSM419) (Ensifer medicae).